Here is a 116-residue protein sequence, read N- to C-terminus: Putative pterin-4-alpha-carbinolamine dehydratase 1 (116 aa).

The protein belongs to the pterin-4-alpha-carbinolamine dehydratase family.

It catalyses the reaction (4aS,6R)-4a-hydroxy-L-erythro-5,6,7,8-tetrahydrobiopterin = (6R)-L-erythro-6,7-dihydrobiopterin + H2O. The polypeptide is Putative pterin-4-alpha-carbinolamine dehydratase 1 (Cupriavidus pinatubonensis (strain JMP 134 / LMG 1197) (Cupriavidus necator (strain JMP 134))).